Consider the following 344-residue polypeptide: 5,10-methenyltetrahydromethanopterin hydrogenase (344 aa).

The protein belongs to the HMD family. Homotetramer.

It catalyses the reaction 5,10-methenyl-5,6,7,8-tetrahydromethanopterin + H2 = 5,10-methylenetetrahydromethanopterin + H(+). It functions in the pathway one-carbon metabolism; methanogenesis from CO(2); 5,10-methylene-5,6,7,8-tetrahydromethanopterin from 5,10-methenyl-5,6,7,8-tetrahydromethanopterin (hydrogen route): step 1/1. Activity requires salt; 100 mM sodium or potassium salts of chloride, phosphate or sulfate are equally effective. Inactivated by O(2). Catalyzes the reversible reduction of methenyl-H(4)MPT(+) to methylene-H(4)MPT. The sequence is that of 5,10-methenyltetrahydromethanopterin hydrogenase from Methanothermobacter marburgensis (strain ATCC BAA-927 / DSM 2133 / JCM 14651 / NBRC 100331 / OCM 82 / Marburg) (Methanobacterium thermoautotrophicum).